The sequence spans 610 residues: UvrABC system protein C (610 aa).

The GIY-YIG domain occupies 13 to 92 (TLPGVYLMKN…IKQHKPRYNA (80 aa)). A UVR domain is found at 204 to 239 (KDVLKDLYEEMRLLSEQLEFEKANHLLRTIRYIEKT).

The protein belongs to the UvrC family. In terms of assembly, interacts with UvrB in an incision complex.

It localises to the cytoplasm. In terms of biological role, the UvrABC repair system catalyzes the recognition and processing of DNA lesions. UvrC both incises the 5' and 3' sides of the lesion. The N-terminal half is responsible for the 3' incision and the C-terminal half is responsible for the 5' incision. The sequence is that of UvrABC system protein C from Protochlamydia amoebophila (strain UWE25).